Reading from the N-terminus, the 563-residue chain is Pyruvate decarboxylase (563 aa).

2 residues coordinate pyruvate: aspartate 28 and histidine 115. Thiamine diphosphate-binding positions include threonine 390 and 413 to 415 (GSI). A Mg(2+)-binding site is contributed by aspartate 444. Thiamine diphosphate is bound by residues 445-446 (GS) and 471-476 (NDGYTI). Asparagine 471 and glycine 473 together coordinate Mg(2+). Glutamate 477 contributes to the pyruvate binding site.

It belongs to the TPP enzyme family. As to quaternary structure, homotetramer. Requires Mg(2+) as cofactor. The cofactor is thiamine diphosphate.

It carries out the reaction a 2-oxocarboxylate + H(+) = an aldehyde + CO2. The catalysed reaction is pyruvate + H(+) = acetaldehyde + CO2. In Kluyveromyces lactis (strain ATCC 8585 / CBS 2359 / DSM 70799 / NBRC 1267 / NRRL Y-1140 / WM37) (Yeast), this protein is Pyruvate decarboxylase (PDC1).